A 96-amino-acid polypeptide reads, in one-letter code: Transcription and mRNA export factor SUS1 (96 aa).

It belongs to the ENY2 family. Component of the nuclear pore complex (NPC)-associated TREX-2 complex (transcription and export complex 2), composed of at least SUS1, SAC3, THP1, SEM1, and CDC31. TREX-2 contains 2 SUS1 chains. The TREX-2 complex interacts with the nucleoporin NUP1. Component of the 1.8 MDa SAGA transcription coactivator-HAT complex. SAGA is built of 5 distinct domains with specialized functions. Within the SAGA complex, SUS1, SGF11, SGF73 and UBP8 form an additional subcomplex of SAGA called the DUB module (deubiquitination module). Interacts directly with THP1, SAC3, SGF11, and with the RNA polymerase II.

Its subcellular location is the nucleus. It localises to the nucleoplasm. The protein resides in the cytoplasm. It is found in the P-body. Its function is as follows. Involved in mRNA export coupled transcription activation by association with both the TREX-2 and the SAGA complexes. At the promoters, SAGA is required for recruitment of the basal transcription machinery. It influences RNA polymerase II transcriptional activity through different activities such as TBP interaction and promoter selectivity, interaction with transcription activators, and chromatin modification through histone acetylation and deubiquitination. Within the SAGA complex, participates in a subcomplex required for deubiquitination of H2B and for the maintenance of steady-state H3 methylation levels. The TREX-2 complex functions in docking export-competent ribonucleoprotein particles (mRNPs) to the nuclear entrance of the nuclear pore complex (nuclear basket). TREX-2 participates in mRNA export and accurate chromatin positioning in the nucleus by tethering genes to the nuclear periphery. May also be involved in cytoplasmic mRNA decay by interaction with components of P-bodies. The protein is Transcription and mRNA export factor SUS1 of Kluyveromyces lactis (strain ATCC 8585 / CBS 2359 / DSM 70799 / NBRC 1267 / NRRL Y-1140 / WM37) (Yeast).